Reading from the N-terminus, the 605-residue chain is Alpha-amylase (605 aa).

Residues 1–33 (MGVRRSLAALLAALLGCATSLVALTVAASPAHA) form the signal peptide. The Ca(2+) site is built by asparagine 130 and aspartate 189. The active-site Nucleophile is the aspartate 219. Position 223 (histidine 223) interacts with Ca(2+). Glutamate 253 serves as the catalytic Proton donor. The region spanning 500–605 (GDDCTTVTAR…CSQNFYDSWR (106 aa)) is the CBM20 domain.

It belongs to the glycosyl hydrolase 13 family. In terms of assembly, monomer. It depends on Ca(2+) as a cofactor.

It catalyses the reaction Endohydrolysis of (1-&gt;4)-alpha-D-glucosidic linkages in polysaccharides containing three or more (1-&gt;4)-alpha-linked D-glucose units.. This Thermomonospora curvata protein is Alpha-amylase (tam).